The chain runs to 247 residues: Transmembrane protein 33 (247 aa).

Position 2 is an N-acetylalanine (alanine 2). Residues 2–31 (ADTTPNGPQGAGAVQFMMTNKLDTAMWLSR) are Lumenal-facing. The helical transmembrane segment at 32–52 (LFTVYCSALFVLPLLGLHEAA) threads the bilayer. At 53-100 (SFYQRALLANALTSALRLHQRLPHFQLSRAFLAQALLEDSCHYLLYSL) the chain is on the cytoplasmic side. A helical transmembrane segment spans residues 101 to 121 (IFVNSYPVTMSIFPVLLFSLL). The Lumenal segment spans residues 122–155 (HAATYTKKVLDARGSNSLPLLRSVLDKLSANQQN). Residues 156 to 176 (ILKFIACNEIFLMPATVFMLF) form a helical membrane-spanning segment. Residues 177 to 247 (SGQGSLLQPF…FISRLAPTVP (71 aa)) lie on the Cytoplasmic side of the membrane.

It belongs to the PER33/POM33 family. In terms of assembly, interacts with EIF2AK3. Interacts with ARL6IP1, isoform RTN1-A of RTN1, isoform RTN2-B of RTN2, isoform 3 of RTN3 and isoform 3 of RTN4. Interacts with RNF5. Interacts with RNF26. Interacts with PKD2. Prostate cancer and several cancer cell lines (at protein level). Widely expressed. Expressed at higher levels in endocrine-resistant breast cancer cells as compared to endocrine-sensitive breast cancer cells. Expressed at higher levels in early recurrence breast cancer tissues as compared to non-recurrent breast tumors.

The protein localises to the endoplasmic reticulum membrane. Its subcellular location is the melanosome. It localises to the nucleus envelope. Acts as a regulator of the tubular endoplasmic reticulum (ER) network by modulating intracellular calcium homeostasis. Mechanistically, stimulates PKD2 calcium-dependent activity. Suppresses the RTN3/4-induced formation of the ER tubules. Positively regulates PERK-mediated and IRE1-mediated unfolded protein response signaling. Plays an essential role in VEGF-mediated release of Ca(2+) from ER stores during angiogenesis. Also plays a role in the modulation of innate immune signaling through the cGAS-STING pathway by interacting with RNF26. Participates in lipid metabolism by acting as a downstream effector of the pyruvate kinase/PKM. Forms a complex with RNF5 to facilitate polyubiquitination and subsequent degradation of SCAP on the ER membrane. The protein is Transmembrane protein 33 (TMEM33) of Homo sapiens (Human).